A 441-amino-acid chain; its full sequence is UPF0761 membrane protein Clim_1521 (441 aa).

Transmembrane regions (helical) follow at residues 54–74, 122–142, 161–181, 203–223, 233–253, and 266–286; these read IFLS…PFLA, TVPL…ISTI, AFTL…SSLG, LISF…YMLV, AFSG…WFVF, and GAIS…LVVL.

This sequence belongs to the UPF0761 family.

It is found in the cell inner membrane. In Chlorobium limicola (strain DSM 245 / NBRC 103803 / 6330), this protein is UPF0761 membrane protein Clim_1521.